The primary structure comprises 80 residues: Sulfur carrier protein TusA (80 aa).

Cys17 serves as the catalytic Cysteine persulfide intermediate.

This sequence belongs to the sulfur carrier protein TusA family.

The protein localises to the cytoplasm. In terms of biological role, sulfur carrier protein which probably makes part of a sulfur-relay system. This is Sulfur carrier protein TusA from Pseudomonas putida (strain ATCC 47054 / DSM 6125 / CFBP 8728 / NCIMB 11950 / KT2440).